Reading from the N-terminus, the 90-residue chain is DNA-binding protein HU-alpha (90 aa).

This sequence belongs to the bacterial histone-like protein family. As to quaternary structure, heterodimer of an alpha and a beta chain.

Functionally, histone-like DNA-binding protein which is capable of wrapping DNA to stabilize it, and thus to prevent its denaturation under extreme environmental conditions. The protein is DNA-binding protein HU-alpha (hupA) of Pseudomonas aeruginosa (strain ATCC 15692 / DSM 22644 / CIP 104116 / JCM 14847 / LMG 12228 / 1C / PRS 101 / PAO1).